We begin with the raw amino-acid sequence, 155 residues long: 6,7-dimethyl-8-ribityllumazine synthase (155 aa).

5-amino-6-(D-ribitylamino)uracil is bound by residues Phe-24, 58–60, and 82–84; these read AFE and VII. 87 to 88 contributes to the (2S)-2-hydroxy-3-oxobutyl phosphate binding site; that stretch reads ST. His-90 serves as the catalytic Proton donor. A 5-amino-6-(D-ribitylamino)uracil-binding site is contributed by Phe-115. Arg-129 provides a ligand contact to (2S)-2-hydroxy-3-oxobutyl phosphate.

It belongs to the DMRL synthase family.

It catalyses the reaction (2S)-2-hydroxy-3-oxobutyl phosphate + 5-amino-6-(D-ribitylamino)uracil = 6,7-dimethyl-8-(1-D-ribityl)lumazine + phosphate + 2 H2O + H(+). The protein operates within cofactor biosynthesis; riboflavin biosynthesis; riboflavin from 2-hydroxy-3-oxobutyl phosphate and 5-amino-6-(D-ribitylamino)uracil: step 1/2. Functionally, catalyzes the formation of 6,7-dimethyl-8-ribityllumazine by condensation of 5-amino-6-(D-ribitylamino)uracil with 3,4-dihydroxy-2-butanone 4-phosphate. This is the penultimate step in the biosynthesis of riboflavin. This is 6,7-dimethyl-8-ribityllumazine synthase from Chlorobium chlorochromatii (strain CaD3).